Here is a 303-residue protein sequence, read N- to C-terminus: 1D-myo-inositol 2-acetamido-2-deoxy-alpha-D-glucopyranoside deacetylase (303 aa).

Zn(2+) contacts are provided by His-15, Asp-18, and His-157.

It belongs to the MshB deacetylase family. The cofactor is Zn(2+).

It catalyses the reaction 1D-myo-inositol 2-acetamido-2-deoxy-alpha-D-glucopyranoside + H2O = 1D-myo-inositol 2-amino-2-deoxy-alpha-D-glucopyranoside + acetate. In terms of biological role, catalyzes the deacetylation of 1D-myo-inositol 2-acetamido-2-deoxy-alpha-D-glucopyranoside (GlcNAc-Ins) in the mycothiol biosynthesis pathway. This is 1D-myo-inositol 2-acetamido-2-deoxy-alpha-D-glucopyranoside deacetylase from Kribbella flavida (strain DSM 17836 / JCM 10339 / NBRC 14399).